Reading from the N-terminus, the 159-residue chain is MSKKLYLIIRIKGEPDAHPDVRKTLENLRLLRRYAAVVYPADLPGLEGMLRKAQAWITWGEIRKDVLAKLLEVRGRAPGDKKLTPEYIKEKFGVNSFEELAEKIINGEVVLHKQEAIKPFFRLHPPRGGFKKSIKKPYRSGGEAGYRGEAINELVLRML.

Belongs to the universal ribosomal protein uL30 family. Part of the 50S ribosomal subunit.

The chain is Large ribosomal subunit protein uL30 from Ignicoccus hospitalis (strain KIN4/I / DSM 18386 / JCM 14125).